We begin with the raw amino-acid sequence, 147 residues long: MQPLSILVLHGPNLNLLGKREPGVYGSTTLAEINSLLAEAALKLQAKVFPLQSNHEGVLVDAIHEALGKHQGILINAGAYTHTSVALRDAIAAVNLPTVEVHLSNIYRREDFRHHSYIAPVVIGQISGFGVQSYLLGLQGLVAHLKG.

The active-site Proton acceptor is Tyr-25. Substrate contacts are provided by Asn-76, His-82, and Asp-89. Residue His-102 is the Proton donor of the active site. Substrate contacts are provided by residues 103-104 (LS) and Arg-113.

Belongs to the type-II 3-dehydroquinase family. In terms of assembly, homododecamer.

The catalysed reaction is 3-dehydroquinate = 3-dehydroshikimate + H2O. It participates in metabolic intermediate biosynthesis; chorismate biosynthesis; chorismate from D-erythrose 4-phosphate and phosphoenolpyruvate: step 3/7. Catalyzes a trans-dehydration via an enolate intermediate. The sequence is that of 3-dehydroquinate dehydratase from Nostoc sp. (strain PCC 7120 / SAG 25.82 / UTEX 2576).